We begin with the raw amino-acid sequence, 293 residues long: MPELPEVETVRRGLQPFMEGATVVRVEQNRPDLRFAFPENFAERLSGRRIEALGRRAKYLTVHLDDGLSIISHLGMSGSFRIEAEDAQGLPGGFHHERSKNSLHDHVVFHLMRSDGASARIIYNDPRRFGFMLFAEKGALEEHPLLKDLGVEPTGNLLSGEVLAALFKGRRTPLKAALLDQRLIAGLGNIYVCEALWRAGLSPMRAAGSVAGEMDVMERLAGAIRSVIAQAIAAGGSSLKDYIQADGALGYFQHSFSVYGREGKPCRNPACGGTVERVVQSGRSTFFCASCQT.

The active-site Schiff-base intermediate with DNA is Pro2. Glu3 serves as the catalytic Proton donor. The active-site Proton donor; for beta-elimination activity is the Lys58. 3 residues coordinate DNA: His104, Arg127, and Arg170. The FPG-type zinc-finger motif lies at 257–293; it reads SVYGREGKPCRNPACGGTVERVVQSGRSTFFCASCQT. The active-site Proton donor; for delta-elimination activity is the Arg283.

Belongs to the FPG family. As to quaternary structure, monomer. Zn(2+) serves as cofactor.

It carries out the reaction Hydrolysis of DNA containing ring-opened 7-methylguanine residues, releasing 2,6-diamino-4-hydroxy-5-(N-methyl)formamidopyrimidine.. The enzyme catalyses 2'-deoxyribonucleotide-(2'-deoxyribose 5'-phosphate)-2'-deoxyribonucleotide-DNA = a 3'-end 2'-deoxyribonucleotide-(2,3-dehydro-2,3-deoxyribose 5'-phosphate)-DNA + a 5'-end 5'-phospho-2'-deoxyribonucleoside-DNA + H(+). Involved in base excision repair of DNA damaged by oxidation or by mutagenic agents. Acts as a DNA glycosylase that recognizes and removes damaged bases. Has a preference for oxidized purines, such as 7,8-dihydro-8-oxoguanine (8-oxoG). Has AP (apurinic/apyrimidinic) lyase activity and introduces nicks in the DNA strand. Cleaves the DNA backbone by beta-delta elimination to generate a single-strand break at the site of the removed base with both 3'- and 5'-phosphates. The chain is Formamidopyrimidine-DNA glycosylase from Brucella ovis (strain ATCC 25840 / 63/290 / NCTC 10512).